The primary structure comprises 122 residues: MSLTVTTKENEALVNEIRSLVEISRQNSAKIWRDMAERLANGRRRYASINLYKIDKFAKDGDVIVVPGSVLGVGKITKKVTIGAVHFSRAATEKLVRSGCAFMSLSDVAKANPKGTNVKIMR.

Belongs to the eukaryotic ribosomal protein eL18 family.

The polypeptide is Large ribosomal subunit protein eL18 (Thermoplasma volcanium (strain ATCC 51530 / DSM 4299 / JCM 9571 / NBRC 15438 / GSS1)).